The sequence spans 513 residues: Xylose import ATP-binding protein XylG (513 aa).

ABC transporter domains lie at 5–242 (LEMK…VGRE) and 259–505 (LRIE…LRSE). 37–44 (GENGSGKS) contacts ATP.

Belongs to the ABC transporter superfamily. Xylose importer (TC 3.A.1.2.4) family. The complex is composed of two ATP-binding proteins (XylG), two transmembrane proteins (XylH) and a solute-binding protein (XylF).

The protein localises to the cell inner membrane. The catalysed reaction is D-xylose(out) + ATP + H2O = D-xylose(in) + ADP + phosphate + H(+). In terms of biological role, part of the ABC transporter complex XylFGH involved in xylose import. Responsible for energy coupling to the transport system. This chain is Xylose import ATP-binding protein XylG, found in Shigella boydii serotype 4 (strain Sb227).